The primary structure comprises 176 residues: ATP-dependent protease subunit HslV (176 aa).

T5 is a catalytic residue. Na(+) is bound by residues G161, C164, and T167.

It belongs to the peptidase T1B family. HslV subfamily. In terms of assembly, a double ring-shaped homohexamer of HslV is capped on each side by a ring-shaped HslU homohexamer. The assembly of the HslU/HslV complex is dependent on binding of ATP.

The protein localises to the cytoplasm. It catalyses the reaction ATP-dependent cleavage of peptide bonds with broad specificity.. Allosterically activated by HslU binding. In terms of biological role, protease subunit of a proteasome-like degradation complex believed to be a general protein degrading machinery. The chain is ATP-dependent protease subunit HslV from Wolinella succinogenes (strain ATCC 29543 / DSM 1740 / CCUG 13145 / JCM 31913 / LMG 7466 / NCTC 11488 / FDC 602W) (Vibrio succinogenes).